Reading from the N-terminus, the 120-residue chain is UPF0231 protein YacL (120 aa).

Belongs to the UPF0231 family.

The protein is UPF0231 protein YacL of Escherichia fergusonii (strain ATCC 35469 / DSM 13698 / CCUG 18766 / IAM 14443 / JCM 21226 / LMG 7866 / NBRC 102419 / NCTC 12128 / CDC 0568-73).